Consider the following 380-residue polypeptide: uncharacterized protein (380 aa).

The tract at residues 251–275 is disordered; that stretch reads NMSERPPTPSHDTASSSTSTDPNPL. Residues 260-272 are compositionally biased toward low complexity; the sequence is SHDTASSSTSTDP.

This is an uncharacterized protein from Allium cepa var. aggregatum (Shallot).